A 678-amino-acid chain; its full sequence is Penicillin-binding protein activator LpoA (678 aa).

Residues 1–26 (MVPSTFSRLKAARCLPVVLAALIFAG) form the signal peptide. Cysteine 27 carries the N-palmitoyl cysteine lipid modification. Cysteine 27 carries S-diacylglycerol cysteine lipidation. The span at 300–310 (AADVAEQPQPQ) shows a compositional bias: low complexity. Disordered stretches follow at residues 300 to 340 (AADV…PVSA) and 496 to 528 (ALTG…DDQF). Polar residues predominate over residues 311–327 (TADSVASPAQASVSDLT). Composition is skewed to low complexity over residues 330-340 (QPAAQPVPVSA) and 513-528 (TTNN…DDQF).

This sequence belongs to the LpoA family. As to quaternary structure, interacts with PBP1a.

The protein localises to the cell outer membrane. Functionally, regulator of peptidoglycan synthesis that is essential for the function of penicillin-binding protein 1A (PBP1a). The polypeptide is Penicillin-binding protein activator LpoA (Shigella flexneri serotype X (strain 2002017)).